We begin with the raw amino-acid sequence, 270 residues long: Bacterial microcompartment shell protein PduB (270 aa).

2 consecutive BMC circularly permuted domains span residues 47–152 and 154–262; these read EFVG…DRTF and DVYA…GSEP.

The protein belongs to the EutL/PduB family. In terms of assembly, homotrimerizes to form a pseudohexamer with a central pore. The trimers pack into an array. Both forms interact with shell protein PduA. In purified BMCs seen as a 30.0 kDa and 25.0 kDa form; the smaller form is called PduB'.

The protein localises to the bacterial microcompartment. It participates in polyol metabolism; 1,2-propanediol degradation. Functionally, the two proteins produced are among the major shell proteins of the bacterial microcompartment (BMC) shell dedicated to 1,2-propanediol (1,2-PD) degradation. Overexpression of the gene gives large amorphous intracellular structures; when only PduB is overexpressed large circular bodies are observed which contain concentric rings, whereas with PduB' overexpression internal bodies with regular straight-lined structures were generated. The N-terminus of the long form (PduB) is required for correct formation of BMCs. May play a major role in binding the enzyme contents to the shell. Its function is as follows. Expression of a cosmid containing the full 21-gene pdu operon in E.coli allows E.coli to grow on 1,2-propanediol (1,2-PD) with the appearance of BMCs in its cytoplasm. In terms of biological role, the 1,2-PD-specific bacterial microcompartment (BMC) concentrates low levels of 1,2-PD catabolic enzymes, concentrates volatile reaction intermediates thus enhancing pathway flux and keeps the level of toxic, mutagenic propionaldehyde low. This Citrobacter freundii protein is Bacterial microcompartment shell protein PduB.